The sequence spans 529 residues: Phosphoenolpyruvate carboxykinase (ATP) (529 aa).

R55, Y190, and K196 together coordinate substrate. Residues K196, H215, and G231 to T239 contribute to the ATP site. Mn(2+) contacts are provided by K196 and H215. Mn(2+) is bound at residue D252. ATP contacts are provided by E280, R317, and T442. Residue R317 coordinates substrate.

The protein belongs to the phosphoenolpyruvate carboxykinase (ATP) family. The cofactor is Mn(2+).

It is found in the cytoplasm. It catalyses the reaction oxaloacetate + ATP = phosphoenolpyruvate + ADP + CO2. The protein operates within carbohydrate biosynthesis; gluconeogenesis. Its function is as follows. Involved in the gluconeogenesis. Catalyzes the conversion of oxaloacetate (OAA) to phosphoenolpyruvate (PEP) through direct phosphoryl transfer between the nucleoside triphosphate and OAA. The polypeptide is Phosphoenolpyruvate carboxykinase (ATP) (Deinococcus geothermalis (strain DSM 11300 / CIP 105573 / AG-3a)).